The primary structure comprises 686 residues: Lysophospholipase 3 (686 aa).

A signal peptide spans 1–26 (MIRPLCSKIIISYIFAISQFLLAANA). The PLA2c domain occupies 39-592 (SCPDDINLVR…KNYCWNGTLD (554 aa)). Asn-56, Asn-82, Asn-129, Asn-166, Asn-221, Asn-283, Asn-313, Asn-351, Asn-495, Asn-519, Asn-547, Asn-571, Asn-588, and Asn-614 each carry an N-linked (GlcNAc...) asparagine glycan. A lipid anchor (GPI-anchor amidated asparagine) is attached at Asn-659. A propeptide spans 660–686 (SGSHLSGISVKFSAMIMLTLLMFTGAV) (removed in mature form).

Belongs to the lysophospholipase family.

It localises to the cell membrane. It catalyses the reaction a 1-acyl-sn-glycero-3-phosphocholine + H2O = sn-glycerol 3-phosphocholine + a fatty acid + H(+). Sequentially removes both fatty acyl groups from diacylglycerophospholipids and therefore has both phospholipase A and lysophospholipase activities. Substrate preference is phosphatidylserine &gt; phosphatidylinositol. Does not cleave phosphatidylcholine, phosphatidylethanolamine, phosphatidic acid and phosphatidylinositol-bisphosphate. Mainly responsible for the degradation of phosphatidylinositol in vivo. The protein is Lysophospholipase 3 (PLB3) of Saccharomyces cerevisiae (strain ATCC 204508 / S288c) (Baker's yeast).